The sequence spans 357 residues: Alternative oxidase, mitochondrial (357 aa).

Residues 152 to 172 (LTRCIFLESIAGVPGAVASFI) form a helical membrane-spanning segment. E159, E198, and H201 together coordinate Fe cation. The helical transmembrane segment at 218–238 (IIYVGQGVFCNLFFLFYLANP) threads the bilayer. 3 residues coordinate Fe cation: E249, E304, and H307. Residues 330–357 (IPDLKEPQPESGLKVTKPHGWEKEELKL) form a disordered region. Residues 348–357 (HGWEKEELKL) are compositionally biased toward basic and acidic residues.

Belongs to the alternative oxidase family. Fe cation serves as cofactor.

The protein localises to the mitochondrion inner membrane. In terms of biological role, catalyzes cyanide-resistant oxygen consumption. May increase respiration when the cytochrome respiratory pathway is restricted, or in response to low temperatures. The protein is Alternative oxidase, mitochondrial (STO1) of Scheffersomyces stipitis (strain ATCC 58785 / CBS 6054 / NBRC 10063 / NRRL Y-11545) (Yeast).